The following is a 250-amino-acid chain: 3-deoxy-manno-octulosonate cytidylyltransferase (250 aa).

The protein belongs to the KdsB family.

The protein localises to the cytoplasm. It catalyses the reaction 3-deoxy-alpha-D-manno-oct-2-ulosonate + CTP = CMP-3-deoxy-beta-D-manno-octulosonate + diphosphate. Its pathway is nucleotide-sugar biosynthesis; CMP-3-deoxy-D-manno-octulosonate biosynthesis; CMP-3-deoxy-D-manno-octulosonate from 3-deoxy-D-manno-octulosonate and CTP: step 1/1. The protein operates within bacterial outer membrane biogenesis; lipopolysaccharide biosynthesis. In terms of biological role, activates KDO (a required 8-carbon sugar) for incorporation into bacterial lipopolysaccharide in Gram-negative bacteria. The chain is 3-deoxy-manno-octulosonate cytidylyltransferase from Francisella philomiragia subsp. philomiragia (strain ATCC 25017 / CCUG 19701 / FSC 153 / O#319-036).